A 280-amino-acid polypeptide reads, in one-letter code: Eukaryotic translation initiation factor 3 subunit F-1 (280 aa).

The region spanning 8-138 (VRVHPVVLFQ…LRAYICIQLG (131 aa)) is the MPN domain.

The protein belongs to the eIF-3 subunit F family. As to quaternary structure, component of the eukaryotic translation initiation factor 3 (eIF-3) complex. The eIF-3 complex interacts with pix.

The protein localises to the cytoplasm. Component of the eukaryotic translation initiation factor 3 (eIF-3) complex, which is involved in protein synthesis of a specialized repertoire of mRNAs and, together with other initiation factors, stimulates binding of mRNA and methionyl-tRNAi to the 40S ribosome. The eIF-3 complex specifically targets and initiates translation of a subset of mRNAs involved in cell proliferation. This Drosophila mojavensis (Fruit fly) protein is Eukaryotic translation initiation factor 3 subunit F-1.